A 181-amino-acid chain; its full sequence is ATP-dependent protease subunit HslV (181 aa).

The active site involves Thr11. Positions 166, 169, and 172 each coordinate Na(+).

This sequence belongs to the peptidase T1B family. HslV subfamily. In terms of assembly, a double ring-shaped homohexamer of HslV is capped on each side by a ring-shaped HslU homohexamer. The assembly of the HslU/HslV complex is dependent on binding of ATP.

It is found in the cytoplasm. The enzyme catalyses ATP-dependent cleavage of peptide bonds with broad specificity.. With respect to regulation, allosterically activated by HslU binding. Protease subunit of a proteasome-like degradation complex believed to be a general protein degrading machinery. This Chlorobaculum tepidum (strain ATCC 49652 / DSM 12025 / NBRC 103806 / TLS) (Chlorobium tepidum) protein is ATP-dependent protease subunit HslV.